An 89-amino-acid chain; its full sequence is Dynein light chain (89 aa).

The protein belongs to the dynein light chain family. In terms of tissue distribution, tegument.

Its subcellular location is the cytoplasm. It is found in the cytoskeleton. Functionally, acts as a non-catalytic accessory component of a dynein complex. The sequence is that of Dynein light chain (DLC) from Schistosoma mansoni (Blood fluke).